The primary structure comprises 125 residues: Small ribosomal subunit protein mS41 (125 aa).

The N-terminal 10 residues, 1 to 10 (MLSIFGCVRA), are a transit peptide targeting the mitochondrion. The segment at 103–125 (SFFGGERNRKATVAKWRAEQRNK) is disordered.

It belongs to the mitochondrion-specific ribosomal protein mS41 family.

It localises to the mitochondrion. In terms of biological role, involved in telomere length regulation. The polypeptide is Small ribosomal subunit protein mS41 (FYV4) (Candida glabrata (strain ATCC 2001 / BCRC 20586 / JCM 3761 / NBRC 0622 / NRRL Y-65 / CBS 138) (Yeast)).